The chain runs to 145 residues: MLVPKRVKHRREFRGKMRGEAKGGKTIAFGEYGLEAVESHWITNRQIEAARIAMTRFMKRGGRVWIRIFPQKSYTAKGVGVRMGSGKGAPAGWVAVVKRGKIMFEIGGVSEDVAREALRLASNKLPIKTKFVKKSSEVGGESNEG.

The protein belongs to the universal ribosomal protein uL16 family. As to quaternary structure, part of the 50S ribosomal subunit.

In terms of biological role, binds 23S rRNA and is also seen to make contacts with the A and possibly P site tRNAs. This Lactobacillus gasseri (strain ATCC 33323 / DSM 20243 / BCRC 14619 / CIP 102991 / JCM 1131 / KCTC 3163 / NCIMB 11718 / NCTC 13722 / AM63) protein is Large ribosomal subunit protein uL16.